A 380-amino-acid chain; its full sequence is Anhydro-N-acetylmuramic acid kinase (380 aa).

Residue 9-16 (GTSADGVD) coordinates ATP.

It belongs to the anhydro-N-acetylmuramic acid kinase family.

It catalyses the reaction 1,6-anhydro-N-acetyl-beta-muramate + ATP + H2O = N-acetyl-D-muramate 6-phosphate + ADP + H(+). It functions in the pathway amino-sugar metabolism; 1,6-anhydro-N-acetylmuramate degradation. It participates in cell wall biogenesis; peptidoglycan recycling. Its function is as follows. Catalyzes the specific phosphorylation of 1,6-anhydro-N-acetylmuramic acid (anhMurNAc) with the simultaneous cleavage of the 1,6-anhydro ring, generating MurNAc-6-P. Is required for the utilization of anhMurNAc either imported from the medium or derived from its own cell wall murein, and thus plays a role in cell wall recycling. The chain is Anhydro-N-acetylmuramic acid kinase from Synechococcus sp. (strain CC9902).